The sequence spans 604 residues: Glutamine--fructose-6-phosphate aminotransferase [isomerizing] (604 aa).

Cysteine 2 functions as the Nucleophile; for GATase activity in the catalytic mechanism. The region spanning 2–216 is the Glutamine amidotransferase type-2 domain; sequence CGIVGYVGFR…DGDVVRLTRE (215 aa). SIS domains are found at residues 281–420 and 453–594; these read LALD…GRGA and VAEK…VDQP. Lysine 599 serves as the catalytic For Fru-6P isomerization activity.

As to quaternary structure, homodimer.

It localises to the cytoplasm. The enzyme catalyses D-fructose 6-phosphate + L-glutamine = D-glucosamine 6-phosphate + L-glutamate. Catalyzes the first step in hexosamine metabolism, converting fructose-6P into glucosamine-6P using glutamine as a nitrogen source. The protein is Glutamine--fructose-6-phosphate aminotransferase [isomerizing] of Thermus thermophilus (strain ATCC 27634 / DSM 579 / HB8).